The following is a 284-amino-acid chain: uncharacterized protein (284 aa).

The segment at 236-284 (IDITNEADSSEIIDSEPSNKDETEKPSAQETDPFDGKPVDIKDDELPFD) is disordered. Basic and acidic residues-rich tracts occupy residues 252–262 (PSNKDETEKPS) and 269–284 (FDGKPVDIKDDELPFD).

This is an uncharacterized protein from Bacillus subtilis (strain 168).